Consider the following 190-residue polypeptide: Sec-independent protein translocase protein TatB (190 aa).

The helical transmembrane segment at 2–22 (LPDIGGTELLVIAAVALIVVG) threads the bilayer. The interval 130 to 190 (IVSKPARKPP…KASTNSDITS (61 aa)) is disordered. Over residues 134–144 (PARKPPAKKAA) the composition is skewed to basic residues. Residues 145-163 (AKPAAKAELVSKPKASAKA) show a composition bias toward low complexity.

This sequence belongs to the TatB family. As to quaternary structure, the Tat system comprises two distinct complexes: a TatABC complex, containing multiple copies of TatA, TatB and TatC subunits, and a separate TatA complex, containing only TatA subunits. Substrates initially bind to the TatABC complex, which probably triggers association of the separate TatA complex to form the active translocon.

It localises to the cell inner membrane. Its function is as follows. Part of the twin-arginine translocation (Tat) system that transports large folded proteins containing a characteristic twin-arginine motif in their signal peptide across membranes. Together with TatC, TatB is part of a receptor directly interacting with Tat signal peptides. TatB may form an oligomeric binding site that transiently accommodates folded Tat precursor proteins before their translocation. In Caulobacter sp. (strain K31), this protein is Sec-independent protein translocase protein TatB.